A 661-amino-acid chain; its full sequence is DnaJ protein ERDJ2B (661 aa).

The Lumenal segment spans residues 1-8; that stretch reads MAESEENS. The helical transmembrane segment at 9–29 threads the bilayer; sequence VLFPIFILTMMAIPLVPYTFV. At 30-65 the chain is on the cytoplasmic side; sequence KLSRAFSKKQRSIHCQCLECDRSGKYKRSISQSISS. The chain crosses the membrane as a helical span at residues 66-86; the sequence is FTSCSNLTVVLLWIVMIFLIY. Topologically, residues 87-190 are lumenal; that stretch reads HTKNMSRESQ…FILNMNGESG (104 aa). N-linked (GlcNAc...) asparagine glycosylation occurs at Asn-90. The J domain occupies 99-164; it reads EPFGILGLEP…LSRENFEKYG (66 aa). A helical membrane pass occupies residues 191–211; it reads GILLLCTVGLCILLPLVIASI. The SEC63 domain occupies 206–597; that stretch reads LVIASIYLWR…IGCDQKTSLK (392 aa). Over 212–661 the chain is Cytoplasmic; that stretch reads YLWRSSKYTG…SSEESGSDEE (450 aa). Residues 608–661 are disordered; it reads EGENAEEGLEEEDDEIEEEDYESEYSEDEEDKKRGSKKKVNKESSSEESGSDEE. Over residues 609 to 637 the composition is skewed to acidic residues; it reads GENAEEGLEEEDDEIEEEDYESEYSEDEE.

In terms of assembly, interacts with OEP61/TPR7. Expressed in leaves, flower buds and flowers.

Its subcellular location is the endoplasmic reticulum membrane. Functionally, required for integral membrane and secreted preprotein translocation across the endoplasmic reticulum membrane. In Arabidopsis thaliana (Mouse-ear cress), this protein is DnaJ protein ERDJ2B (ERDJ2B).